Here is a 558-residue protein sequence, read N- to C-terminus: Kelch-like protein 23 (558 aa).

Residues 36 to 104 (TDITLQCPSG…AYTSQIEITK (69 aa)) form the BTB domain. The 102-residue stretch at 139-240 (CIGMHSFAEF…DPVYLKTALG (102 aa)) folds into the BACK domain. 6 Kelch repeats span residues 274–320 (TMYI…CLGP), 321–369 (NIYV…TLGG), 370–416 (CVYA…VLHE), 418–466 (IYVI…PFEN), 467–508 (KLYL…IMNG), and 510–557 (IYVT…CVYN).

This is Kelch-like protein 23 (Klhl23) from Mus musculus (Mouse).